A 652-amino-acid polypeptide reads, in one-letter code: Chaperone protein HtpG (652 aa).

An a; substrate-binding region spans residues 1-348 (MATDAHKETL…SDDLPLNVSR (348 aa)). The interval 349–565 (ELLQHNPLLD…EYDFGMGMQR (217 aa)) is b. The tract at residues 566–652 (LLKAAGHAMP…EAKSNAARGD (87 aa)) is c.

This sequence belongs to the heat shock protein 90 family. As to quaternary structure, homodimer.

It is found in the cytoplasm. Its function is as follows. Molecular chaperone. Has ATPase activity. This Alkalilimnicola ehrlichii (strain ATCC BAA-1101 / DSM 17681 / MLHE-1) protein is Chaperone protein HtpG.